A 126-amino-acid polypeptide reads, in one-letter code: MIVGLGTDIAEIERVEKALARSGENFARRILTDSELEQFHASKQQGRFLAKRFAAKEAASKALGTGIAQGVTFHDFTISHDKLGKPLLILSGQAAELASQLQVENIHLSISDERHYAMATVILERR.

The Mg(2+) site is built by Asp8 and Glu57.

This sequence belongs to the P-Pant transferase superfamily. AcpS family. Mg(2+) is required as a cofactor.

Its subcellular location is the cytoplasm. It catalyses the reaction apo-[ACP] + CoA = holo-[ACP] + adenosine 3',5'-bisphosphate + H(+). Functionally, transfers the 4'-phosphopantetheine moiety from coenzyme A to a Ser of acyl-carrier-protein. This is Holo-[acyl-carrier-protein] synthase from Vibrio cholerae serotype O1 (strain ATCC 39315 / El Tor Inaba N16961).